Here is a 670-residue protein sequence, read N- to C-terminus: DNA topoisomerase 6 subunit B (670 aa).

Residues 1 to 30 (MAGDDLVETKKGSSKNSKDSNESKLKQKSP) form a disordered region. The span at 7–25 (VETKKGSSKNSKDSNESKL) shows a compositional bias: basic and acidic residues. ATP is bound by residues Asn-60, Asp-160, 181–182 (TK), 190–197 (GKFGLGAK), and Lys-516.

Belongs to the TOP6B family. Homodimer. Heterotetramer of two TOP6A and two TOP6B subunits. Interacts with SPO11-2, but not with SPO11-1, RHL1 or BIN4. Highly expressed in leaves, stems, flowers and seedlings.

Its subcellular location is the nucleus. It carries out the reaction ATP-dependent breakage, passage and rejoining of double-stranded DNA.. In terms of biological role, component of the DNA topoisomerase VI involved in chromatin organization and progression of endoreduplication cycles. Relaxes both positive and negative superturns and exhibits a strong decatenase activity. The B subunit binds ATP. Involved in cell-elongation processes. This is DNA topoisomerase 6 subunit B from Arabidopsis thaliana (Mouse-ear cress).